The chain runs to 436 residues: Histidinol dehydrogenase (436 aa).

Residues T240, Q262, and H265 each contribute to the substrate site. The Zn(2+) site is built by Q262 and H265. Catalysis depends on proton acceptor residues E331 and H332. Residues H332, D365, E419, and H424 each coordinate substrate. D365 is a Zn(2+) binding site. H424 is a binding site for Zn(2+).

The protein belongs to the histidinol dehydrogenase family. Zn(2+) serves as cofactor.

It carries out the reaction L-histidinol + 2 NAD(+) + H2O = L-histidine + 2 NADH + 3 H(+). It functions in the pathway amino-acid biosynthesis; L-histidine biosynthesis; L-histidine from 5-phospho-alpha-D-ribose 1-diphosphate: step 9/9. Functionally, catalyzes the sequential NAD-dependent oxidations of L-histidinol to L-histidinaldehyde and then to L-histidine. This chain is Histidinol dehydrogenase, found in Leifsonia xyli subsp. xyli (strain CTCB07).